We begin with the raw amino-acid sequence, 344 residues long: Serpentine receptor class H-72 (344 aa).

7 helical membrane passes run 30–50 (GLAF…FFTG), 66–86 (LSLV…SFFI), 110–132 (TVVQ…TLLF), 155–175 (WLAG…FNLA), 221–241 (SIYM…LVIV), 259–279 (YGLI…SVLI), and 292–312 (LVSI…LLVH).

This sequence belongs to the nematode receptor-like protein srh family.

The protein resides in the membrane. This Caenorhabditis elegans protein is Serpentine receptor class H-72 (srh-72).